A 529-amino-acid polypeptide reads, in one-letter code: Bifunctional purine biosynthesis protein PurH (529 aa).

An MGS-like domain is found at 2–148 (QQLRPIHRAL…KNHKDVAIVV (147 aa)).

This sequence belongs to the PurH family.

It carries out the reaction (6R)-10-formyltetrahydrofolate + 5-amino-1-(5-phospho-beta-D-ribosyl)imidazole-4-carboxamide = 5-formamido-1-(5-phospho-D-ribosyl)imidazole-4-carboxamide + (6S)-5,6,7,8-tetrahydrofolate. It catalyses the reaction IMP + H2O = 5-formamido-1-(5-phospho-D-ribosyl)imidazole-4-carboxamide. It functions in the pathway purine metabolism; IMP biosynthesis via de novo pathway; 5-formamido-1-(5-phospho-D-ribosyl)imidazole-4-carboxamide from 5-amino-1-(5-phospho-D-ribosyl)imidazole-4-carboxamide (10-formyl THF route): step 1/1. The protein operates within purine metabolism; IMP biosynthesis via de novo pathway; IMP from 5-formamido-1-(5-phospho-D-ribosyl)imidazole-4-carboxamide: step 1/1. This chain is Bifunctional purine biosynthesis protein PurH, found in Photorhabdus laumondii subsp. laumondii (strain DSM 15139 / CIP 105565 / TT01) (Photorhabdus luminescens subsp. laumondii).